Here is a 620-residue protein sequence, read N- to C-terminus: Chaperone protein HtpG (620 aa).

The tract at residues 1 to 339 (MAKHQFQTEI…SEDLPLNVSR (339 aa)) is a; substrate-binding. Positions 340 to 546 (ELLQENRILA…ASDPMAGMAA (207 aa)) are b. The segment at 547-620 (MFAQMGQEMP…RVASLATKAL (74 aa)) is c.

Belongs to the heat shock protein 90 family. Homodimer.

The protein resides in the cytoplasm. In terms of biological role, molecular chaperone. Has ATPase activity. This Sulfurovum sp. (strain NBC37-1) protein is Chaperone protein HtpG.